A 357-amino-acid chain; its full sequence is MKNNKRILFTGGGTAGHVIVNLALIPYYQERGWEIDYIGSYNGIERDLISPLDGVTYHSVSTGKLRRYMSKENLKDPFKVLKGTMQAYRIIGKRKPSIVFSKGGFVSVPVVAAAKLRGVPSIIHESDYTPGLANKLSIPFTKRVLATFPETMKYLPENKASYVGAVIRDELFTGKRDIGLKISGLKGNKPVLLVMGGSGGSEKINQTIRQSLTKLLDEFEIIHICGKGKVDDSIQLDGYVQFEYINHELKDIFAATDLVISRAGSNAIFEFLALRLPMLLIPLSKEASRGDQIINANSFKKKNYARVLQEEELTEQSLESHLLELSKAAPIIRDEMKKYKSEQSLQSVTEIIDNVMK.

Residues 14–16, Arg168, Ser198, and Gln292 each bind UDP-N-acetyl-alpha-D-glucosamine; that span reads TAG.

Belongs to the glycosyltransferase 28 family. MurG subfamily.

It is found in the cell membrane. It carries out the reaction di-trans,octa-cis-undecaprenyl diphospho-N-acetyl-alpha-D-muramoyl-L-alanyl-D-glutamyl-meso-2,6-diaminopimeloyl-D-alanyl-D-alanine + UDP-N-acetyl-alpha-D-glucosamine = di-trans,octa-cis-undecaprenyl diphospho-[N-acetyl-alpha-D-glucosaminyl-(1-&gt;4)]-N-acetyl-alpha-D-muramoyl-L-alanyl-D-glutamyl-meso-2,6-diaminopimeloyl-D-alanyl-D-alanine + UDP + H(+). The protein operates within cell wall biogenesis; peptidoglycan biosynthesis. Its function is as follows. Cell wall formation. Catalyzes the transfer of a GlcNAc subunit on undecaprenyl-pyrophosphoryl-MurNAc-pentapeptide (lipid intermediate I) to form undecaprenyl-pyrophosphoryl-MurNAc-(pentapeptide)GlcNAc (lipid intermediate II). This Oceanobacillus iheyensis (strain DSM 14371 / CIP 107618 / JCM 11309 / KCTC 3954 / HTE831) protein is UDP-N-acetylglucosamine--N-acetylmuramyl-(pentapeptide) pyrophosphoryl-undecaprenol N-acetylglucosamine transferase.